A 118-amino-acid chain; its full sequence is Protein MGF 110-6L (118 aa).

The first 18 residues, 1–18, serve as a signal peptide directing secretion; sequence MLVIFLGILGLLASQVSS. An N-linked (GlcNAc...) asparagine; by host glycan is attached at Asn-96. A Prevents secretion from ER motif is present at residues 115-118; sequence KDEL.

It belongs to the asfivirus MGF 110 family. In terms of processing, N-glycosylated.

Its subcellular location is the host endoplasmic reticulum lumen. In terms of biological role, plays a role in virus cell tropism, and may be required for efficient virus replication in macrophages. This African swine fever virus (strain Badajoz 1971 Vero-adapted) (Ba71V) protein is Protein MGF 110-6L.